A 251-amino-acid polypeptide reads, in one-letter code: uncharacterized protein (251 aa).

Residues 192 to 238 (CMMCVQRGDERVAITTPYTTDCGHTYCYACIMSRLKLVNNVSCPICK) form an RING-type zinc finger.

The protein localises to the cytoplasm. This is an uncharacterized protein from Schizosaccharomyces pombe (strain 972 / ATCC 24843) (Fission yeast).